Reading from the N-terminus, the 109-residue chain is MSLTADPPACTVPAAGGSSTHKLVNGGADKLIFKIKSSNNNEYRIVPVFGFVDPSGSKDVVITRTAGAPKEDKLVVHFAPAPADATDAQAAFAAVTPAGTVTIPMSATA.

Residues Ser2–Ala109 form the MSP domain.

Expressed at higher level in testis.

The sequence is that of Sperm-specific class P protein 16 (ssp-16) from Caenorhabditis elegans.